The following is a 356-amino-acid chain: Pyruvate dehydrogenase E1 component subunit beta, mitochondrial (356 aa).

The transit peptide at 1-25 (MLSSILKKIQPSLLVNFRIITRTYA) directs the protein to the mitochondrion. E85 lines the thiamine diphosphate pocket. Positions 138, 186, 187, 189, and 191 each coordinate K(+).

Tetramer of 2 alpha and 2 beta subunits. Requires thiamine diphosphate as cofactor.

The protein localises to the mitochondrion matrix. It carries out the reaction N(6)-[(R)-lipoyl]-L-lysyl-[protein] + pyruvate + H(+) = N(6)-[(R)-S(8)-acetyldihydrolipoyl]-L-lysyl-[protein] + CO2. Functionally, the pyruvate dehydrogenase complex catalyzes the overall conversion of pyruvate to acetyl-CoA and CO(2). It contains multiple copies of three enzymatic components: pyruvate dehydrogenase (E1), dihydrolipoamide acetyltransferase (E2) and lipoamide dehydrogenase (E3). This is Pyruvate dehydrogenase E1 component subunit beta, mitochondrial (pdhB) from Dictyostelium discoideum (Social amoeba).